The chain runs to 330 residues: Methylthioribose-1-phosphate isomerase (330 aa).

Residues 49 to 51 (RGA), Arg83, and Gln179 contribute to the substrate site. Asp220 serves as the catalytic Proton donor. 230 to 231 (NK) serves as a coordination point for substrate.

Belongs to the eIF-2B alpha/beta/delta subunits family. MtnA subfamily.

The catalysed reaction is 5-(methylsulfanyl)-alpha-D-ribose 1-phosphate = 5-(methylsulfanyl)-D-ribulose 1-phosphate. It participates in amino-acid biosynthesis; L-methionine biosynthesis via salvage pathway; L-methionine from S-methyl-5-thio-alpha-D-ribose 1-phosphate: step 1/6. In terms of biological role, catalyzes the interconversion of methylthioribose-1-phosphate (MTR-1-P) into methylthioribulose-1-phosphate (MTRu-1-P). This chain is Methylthioribose-1-phosphate isomerase, found in Thermus thermophilus (strain ATCC 27634 / DSM 579 / HB8).